We begin with the raw amino-acid sequence, 126 residues long: Small ribosomal subunit protein uS13 (126 aa).

The interval 98–126 is disordered; it reads PVRGQSTKNNARTRKGRKKTVANKKKATK. A compositionally biased stretch (basic residues) spans 108–126; it reads ARTRKGRKKTVANKKKATK.

Belongs to the universal ribosomal protein uS13 family. Part of the 30S ribosomal subunit. Forms a loose heterodimer with protein S19. Forms two bridges to the 50S subunit in the 70S ribosome.

In terms of biological role, located at the top of the head of the 30S subunit, it contacts several helices of the 16S rRNA. In the 70S ribosome it contacts the 23S rRNA (bridge B1a) and protein L5 of the 50S subunit (bridge B1b), connecting the 2 subunits; these bridges are implicated in subunit movement. Contacts the tRNAs in the A and P-sites. The sequence is that of Small ribosomal subunit protein uS13 from Phocaeicola vulgatus (strain ATCC 8482 / DSM 1447 / JCM 5826 / CCUG 4940 / NBRC 14291 / NCTC 11154) (Bacteroides vulgatus).